A 513-amino-acid chain; its full sequence is Cytochrome P450 monooxygenase orf3 (513 aa).

The helical transmembrane segment at 11–31 (LVALGLIAATIIIYSFTLTVY) threads the bilayer. Asn-211 and Asn-351 each carry an N-linked (GlcNAc...) asparagine glycan. Residue Cys-455 coordinates heme.

The protein belongs to the cytochrome P450 family. Heme serves as cofactor.

The protein resides in the membrane. Its pathway is mycotoxin biosynthesis. In terms of biological role, cytochrome P450 monooxygenase; part of the gene cluster that mediates the biosynthesis of brefeldin A (BFA), a protein transport inhibitor that shows antiviral, antifungal, and antitumor properties. The proposed biosynthesis of BFA involves formation of an acyclic polyketide chain that is differentially tailored throughout the backbone. The highly reducing polyketide synthase Bref-PKS is proposed to synthesize the precisely reduced octaketide precursor, which could then be directly offloaded by the thiohydrolase enzyme Bref-TH followed by a cytochrome P450 monooxygenase-mediated formation of the cyclopentane ring and macrocyclization to afford 7-deoxy BFA. Alternatively, the first ring annulation can also occur on the ACP-tethered intermediate before the thiohydrolase release and lactonization. The C7-hydroxylation by another cytochrome P450 monooxygenase is believed to be the final step in the process to obtain the final structure of BFA. In addition to the HRPKS Bref-PKS and the thiohydrolase Bref-TH, the brefeldin A biosynthesis cluster contains 4 cytochrome p450 monooxygenases (called orf3 to orf6), as well a the probable cluster-specific transcription regulator orf8. The chain is Cytochrome P450 monooxygenase orf3 from Eupenicillium brefeldianum (Penicillium brefeldianum).